The following is a 400-amino-acid chain: Nicotinate phosphoribosyltransferase (400 aa).

His220 carries the phosphohistidine; by autocatalysis modification.

Belongs to the NAPRTase family. Post-translationally, transiently phosphorylated on a His residue during the reaction cycle. Phosphorylation strongly increases the affinity for substrates and increases the rate of nicotinate D-ribonucleotide production. Dephosphorylation regenerates the low-affinity form of the enzyme, leading to product release.

It catalyses the reaction nicotinate + 5-phospho-alpha-D-ribose 1-diphosphate + ATP + H2O = nicotinate beta-D-ribonucleotide + ADP + phosphate + diphosphate. It functions in the pathway cofactor biosynthesis; NAD(+) biosynthesis; nicotinate D-ribonucleotide from nicotinate: step 1/1. Its function is as follows. Catalyzes the synthesis of beta-nicotinate D-ribonucleotide from nicotinate and 5-phospho-D-ribose 1-phosphate at the expense of ATP. In Salmonella dublin (strain CT_02021853), this protein is Nicotinate phosphoribosyltransferase.